A 170-amino-acid polypeptide reads, in one-letter code: 6,7-dimethyl-8-ribityllumazine synthase (170 aa).

5-amino-6-(D-ribitylamino)uracil-binding positions include tryptophan 25, 57–59, and 79–81; these read AVE and AVI. (2S)-2-hydroxy-3-oxobutyl phosphate is bound at residue 84 to 85; the sequence is DT. Histidine 87 acts as the Proton donor in catalysis. Residue asparagine 112 coordinates 5-amino-6-(D-ribitylamino)uracil. Arginine 126 is a (2S)-2-hydroxy-3-oxobutyl phosphate binding site.

This sequence belongs to the DMRL synthase family.

The enzyme catalyses (2S)-2-hydroxy-3-oxobutyl phosphate + 5-amino-6-(D-ribitylamino)uracil = 6,7-dimethyl-8-(1-D-ribityl)lumazine + phosphate + 2 H2O + H(+). It functions in the pathway cofactor biosynthesis; riboflavin biosynthesis; riboflavin from 2-hydroxy-3-oxobutyl phosphate and 5-amino-6-(D-ribitylamino)uracil: step 1/2. Functionally, catalyzes the formation of 6,7-dimethyl-8-ribityllumazine by condensation of 5-amino-6-(D-ribitylamino)uracil with 3,4-dihydroxy-2-butanone 4-phosphate. This is the penultimate step in the biosynthesis of riboflavin. The polypeptide is 6,7-dimethyl-8-ribityllumazine synthase (Thermobifida fusca (strain YX)).